The primary structure comprises 192 residues: UPF0301 protein Bcep1808_0798 (192 aa).

The protein belongs to the UPF0301 (AlgH) family.

The sequence is that of UPF0301 protein Bcep1808_0798 from Burkholderia vietnamiensis (strain G4 / LMG 22486) (Burkholderia cepacia (strain R1808)).